The sequence spans 84 residues: Defensin-like protein 199 (84 aa).

An N-terminal signal peptide occupies residues methionine 1 to serine 24. 4 cysteine pairs are disulfide-bonded: cysteine 40–cysteine 80, cysteine 47–cysteine 72, cysteine 56–cysteine 78, and cysteine 60–cysteine 79.

Belongs to the DEFL family.

Its subcellular location is the secreted. The polypeptide is Defensin-like protein 199 (Arabidopsis thaliana (Mouse-ear cress)).